Here is a 431-residue protein sequence, read N- to C-terminus: MIERVKGTRDFLPEDMAKRRWVFEKIREVFEAYGFKEILTPVMEYTKLFQLRSGEEVVKQLYAFKDKGGRDVSLRPDMTSSVARLYVNSFQMAPKPIKWYYIANMFRYEEPQSGRYREFWQAGVELIGSDKVEADAEVIALFVESYLSTGLRDFTVNIGDRILLDEFAGMLGVSDDIGLMRIIDKRDKLSQEEFINLLKEFGLGESEIEKVLELVEIKGRPDNVLPLAEELFKSKKAKEEISKLYKLTDLLEWYGVKDWIRIDLGIARGFDYYTSIVFEAISPNELGIGSIGGGGRYDNLIEIFGGKPTPATGFAIGIERLLPILEWKGLIPKPQTGPEVFVIPLKDMEKVAINIAVKLRREKIKTDIELSGRKLGKALDYANRVGAKLVIIVGKRDVERGVVTIRDMESGEQYNVSLNEIVDKVKNLLKR.

The protein belongs to the class-II aminoacyl-tRNA synthetase family.

It localises to the cytoplasm. The enzyme catalyses tRNA(His) + L-histidine + ATP = L-histidyl-tRNA(His) + AMP + diphosphate + H(+). This Pyrococcus horikoshii (strain ATCC 700860 / DSM 12428 / JCM 9974 / NBRC 100139 / OT-3) protein is Histidine--tRNA ligase (hisS).